An 802-amino-acid chain; its full sequence is LPS-assembly protein LptD (802 aa).

A signal peptide spans 1–29 (MARLFSLKPLVLALGFCFGTHCAAADAVA).

It belongs to the LptD family. Component of the lipopolysaccharide transport and assembly complex. Interacts with LptE and LptA.

It is found in the cell outer membrane. Together with LptE, is involved in the assembly of lipopolysaccharide (LPS) at the surface of the outer membrane. This chain is LPS-assembly protein LptD, found in Neisseria meningitidis serogroup A / serotype 4A (strain DSM 15465 / Z2491).